A 185-amino-acid polypeptide reads, in one-letter code: Large ribosomal subunit protein uL5 (185 aa).

The protein belongs to the universal ribosomal protein uL5 family. As to quaternary structure, part of the 50S ribosomal subunit; part of the 5S rRNA/L5/L18/L25 subcomplex. Contacts the 5S rRNA and the P site tRNA. Forms a bridge to the 30S subunit in the 70S ribosome.

Functionally, this is one of the proteins that bind and probably mediate the attachment of the 5S RNA into the large ribosomal subunit, where it forms part of the central protuberance. In the 70S ribosome it contacts protein S13 of the 30S subunit (bridge B1b), connecting the 2 subunits; this bridge is implicated in subunit movement. Contacts the P site tRNA; the 5S rRNA and some of its associated proteins might help stabilize positioning of ribosome-bound tRNAs. This chain is Large ribosomal subunit protein uL5, found in Caulobacter vibrioides (strain NA1000 / CB15N) (Caulobacter crescentus).